Here is a 156-residue protein sequence, read N- to C-terminus: ATP synthase subunit b (156 aa).

The chain crosses the membrane as a helical span at residues 11-31 (AIAFVLFVLFCMKYVWPPIMA).

It belongs to the ATPase B chain family. F-type ATPases have 2 components, F(1) - the catalytic core - and F(0) - the membrane proton channel. F(1) has five subunits: alpha(3), beta(3), gamma(1), delta(1), epsilon(1). F(0) has three main subunits: a(1), b(2) and c(10-14). The alpha and beta chains form an alternating ring which encloses part of the gamma chain. F(1) is attached to F(0) by a central stalk formed by the gamma and epsilon chains, while a peripheral stalk is formed by the delta and b chains.

It localises to the cell inner membrane. Functionally, f(1)F(0) ATP synthase produces ATP from ADP in the presence of a proton or sodium gradient. F-type ATPases consist of two structural domains, F(1) containing the extramembraneous catalytic core and F(0) containing the membrane proton channel, linked together by a central stalk and a peripheral stalk. During catalysis, ATP synthesis in the catalytic domain of F(1) is coupled via a rotary mechanism of the central stalk subunits to proton translocation. In terms of biological role, component of the F(0) channel, it forms part of the peripheral stalk, linking F(1) to F(0). The protein is ATP synthase subunit b of Cronobacter sakazakii (strain ATCC BAA-894) (Enterobacter sakazakii).